A 301-amino-acid polypeptide reads, in one-letter code: Single-stranded DNA-binding protein (301 aa).

The tract at residues 3–7 (KRKST) is LAST. Residues H64, C77, C87, and C90 each contribute to the Zn(2+) site. The interval 272 to 301 (TKTEDDFMSSSSGSSSSADDTDLDDLLNDL) is disordered. The segment covering 279 to 289 (MSSSSGSSSSA) has biased composition (low complexity). The segment covering 290–301 (DDTDLDDLLNDL) has biased composition (acidic residues).

Belongs to the Tequatrovirus single-stranded DNA-binding protein family. In terms of assembly, homodimer in the absence of DNA, monomer when binding DNA. Interacts with the DNA helicase assembly protein; a ternary complex between the helicase assembly protein, the single-stranded DNA-binding protein and ssDNA is an obligatory intermediate in the helicase loading mechanism. Part of the replicase complex that includes the DNA polymerase, the polymerase clamp, the clamp loader complex, the single-stranded DNA binding protein, the primase, the DnaB-like SF4 replicative helicase and the helicase assembly factor. Interacts (via C-terminus) with the viral SF1 dDA helicase. Interacts with the viral SF2 UvsW repair helicase.

Single-stranded DNA-binding protein that participates in viral DNA replication, recombination, and repair. Coats the lagging-strand ssDNA as the replication fork advances. Stimulates the activities of viral DNA polymerase and DnaB-like SF4 replicative helicase, probably via its interaction with the helicase assembly factor. Stimulates the unwinding activity of UvsW helicase, inhibits it DNA winding activity. Together with DnaB-like SF4 replicative helicase and the helicase assembly factor, promotes pairing of two homologous DNA molecules containing complementary single-stranded regions and mediates homologous DNA strand exchange. Also promotes the formation of joint molecules. mRNA specific autogenous translational repressor. The chain is Single-stranded DNA-binding protein from Escherichia coli (Bacteriophage T4).